We begin with the raw amino-acid sequence, 1395 residues long: DNA polymerase II large subunit (1395 aa).

Disordered regions lie at residues 279-320 and 657-704; these read IGKD…PRVE and GNRM…MSDT. The span at 283–312 shows a compositional bias: acidic residues; that stretch reads EADEGDSAEDANGDDAGEGADDDGGDEADE. 2 stretches are compositionally biased toward basic and acidic residues: residues 661–671 and 690–700; these read GRPEKSERRDL and DVAKATKHADD.

It belongs to the archaeal DNA polymerase II family. As to quaternary structure, heterodimer of a large subunit and a small subunit. This protein undergoes a protein self splicing that involves a post-translational excision of the intervening region (intein) followed by peptide ligation.

The catalysed reaction is DNA(n) + a 2'-deoxyribonucleoside 5'-triphosphate = DNA(n+1) + diphosphate. The enzyme catalyses Exonucleolytic cleavage in the 3'- to 5'-direction to yield nucleoside 5'-phosphates.. Its function is as follows. Possesses two activities: a DNA synthesis (polymerase) and an exonucleolytic activity that degrades single-stranded DNA in the 3'- to 5'-direction. Has a template-primer preference which is characteristic of a replicative DNA polymerase. This Haloarcula marismortui (strain ATCC 43049 / DSM 3752 / JCM 8966 / VKM B-1809) (Halobacterium marismortui) protein is DNA polymerase II large subunit.